The primary structure comprises 498 residues: Probable malate:quinone oxidoreductase 2 (498 aa).

The protein belongs to the MQO family. It depends on FAD as a cofactor.

It carries out the reaction (S)-malate + a quinone = a quinol + oxaloacetate. It functions in the pathway carbohydrate metabolism; tricarboxylic acid cycle; oxaloacetate from (S)-malate (quinone route): step 1/1. The polypeptide is Probable malate:quinone oxidoreductase 2 (Staphylococcus aureus (strain COL)).